A 980-amino-acid chain; its full sequence is MRTMHCFLFILLFCLGQVFTDVIFTSERCNRVTYGLRTVNGDPSRYKQCGPSGRVWIVPCAPQMTFDPEDRVCKERLDSRIVKPMRKYETSRTIITTPAPIPSSYPVSAEVIAPGAPAASHAAPEEFVFSTIRPKSRKPKAKTRGKFRKTTTAMIQTTTPMTVESFESMEMTTTPKIVIFASKKNMNNTNRSGESRTQLIRNRNRERGNAPAFTRPGRVRTTTPMSVTHATRFVPGIQHKVTVAPKEVQGMPHTLAPYEKMDRRPDSFGVEELTTMTPEYTVRYNGQTMTENEFLNQLLHIVQHQKTVSERQQQEKFEKMEQERLRQEKEEKARELERRRKLEESETARQAELDRQATIYAEQERMAMERNRELERIRLEEKKRENERVRQEEIAMEISKIRELERLQLERQRKNERVRQELEAARKYKLQEEERQRKIQQQKVEMEQIRQQEEARQEQLRVLEEERARELERVRQEELERQHQMEILRQQEEDQKKKKLEKDREQREQQEAEELNRMIIEKEMKENKQKMIEEKNKRKMLEKEMEDRQNAIYEEEERRIAEEERRKQIEIEERRRIQQQIMIATEERSRLDAMEREREMLRQIKESEKQRKELERQELLATTPITTIKPIYRPDISEYRPPDVESHMIRFTTQSPEWATPSPTWNPAWNTVTAEEETPGIPIIHSQCQVNGECELKYDVDSFCAHPRSPSMYLQCAPLYGRLGRWTERYCPDTLIFIVSIGRCEKGEETRKPYDPDNRVVIPRLPSETSFVEWKGNRVIDHQLPTHISPPRVYPPVPETHQPQIYSTIDQFPKDLLPKIPELATAEKTYAQQYQNHIHGSVVSGGHNHQVVRPIAPTPTIAPNSNVPVSYQISQSQNSLSTNSIKSEIDLSHIHPLFPRVQPDFLSRMLPSLNFKMHDENSGAQSLGSVVKPVLKKIALNQTEQFLDRLLADQKNDEKLRKETIDRLKSSNSDNITKKN.

A signal peptide spans 1–20 (MRTMHCFLFILLFCLGQVFT). N-linked (GlcNAc...) asparagine glycosylation is found at asparagine 187 and asparagine 190. 3 disordered regions span residues 310-354 (ERQQ…AELD), 431-451 (QEEERQRKIQQQKVEMEQIRQ), and 486-512 (EILRQQEEDQKKKKLEKDREQREQQEA). 2 N-linked (GlcNAc...) asparagine glycosylation sites follow: asparagine 941 and asparagine 975.

In Caenorhabditis elegans, this protein is Chitin binding domain containing chtb-2.